Consider the following 1775-residue polypeptide: Atrochrysone carboxylic acid synthase (1775 aa).

One can recognise a Starter acyltransferase (SAT) domain in the interval 35–262 (LRRLQALSKD…YAKWASLPIF (228 aa)). The 434-residue stretch at 400–833 (DSKIAIVGMS…GGNTTMLLEE (434 aa)) folds into the Ketosynthase family 3 (KS3) domain. Active-site for beta-ketoacyl synthase activity residues include C573, H708, and H750. The Malonyl-CoA:ACP transacylase (MAT) domain occupies 934 to 1244 (FAFTGQGAFY…ENNWNTLADS (311 aa)). A product template (PT) domain region spans residues 1313–1631 (TSSIHQVLQE…RSLLPTFFSP (319 aa)). The interval 1317–1451 (HQVLQEDVTG…SAVVEYGDAN (135 aa)) is N-terminal hotdog fold. One can recognise a PKS/mFAS DH domain in the interval 1317–1626 (HQVLQEDVTG…FRRFPRSLLP (310 aa)). H1349 (proton acceptor; for dehydratase activity) is an active-site residue. The C-terminal hotdog fold stretch occupies residues 1480-1626 (AAVLPRNMAY…FRRFPRSLLP (147 aa)). The active-site Proton donor; for dehydratase activity is D1537. A disordered region spans residues 1671–1697 (TAAPVPAPAPVPAKRAEPAPAAAQAAA). Over residues 1688–1697 (PAPAAAQAAA) the composition is skewed to low complexity. The 78-residue stretch at 1697-1774 (ATQNPTITGA…ELKTYIEETF (78 aa)) folds into the Carrier domain. S1734 is subject to O-(pantetheine 4'-phosphoryl)serine.

The enzyme catalyses holo-[ACP] + 8 malonyl-CoA + 8 H(+) = atrochrysone carboxyl-[ACP] + 8 CO2 + 8 CoA + 2 H2O. It participates in secondary metabolite biosynthesis. In terms of biological role, non-reducing polyketide synthase; part of the gene cluster that mediates the biosynthesis of physcion, a natural anthraquinone fungicide that can prevent plant fungal infections. The pathway begins with the polyketide synthase AcPKS that condenses 8 malonyl-CoA units to synthesize atrochrysone thioester which is released from the synthase by the atrochrysone carboxyl ACP thioesterase AcTE that breaks the thioester bond and leads to free atrochrysone carboxylic acid. Spontaneous decarboxylation of atrochrysone carboxylic acid leads to the formation of atrochrysone. Then, atrochrysone undergoes spontaneous dehydration and oxidation, giving the products emodin anthrone and emodin. The O-methyltransferase AcOMT then methylates the C-6 hydroxyl of emodin to form physcion. The sequence is that of Atrochrysone carboxylic acid synthase from Aspergillus chevalieri (Eurotium chevalieri).